An 880-amino-acid polypeptide reads, in one-letter code: Interference hedgehog (880 aa).

The N-terminal stretch at methionine 1–alanine 20 is a signal peptide. The Extracellular portion of the chain corresponds to isoleucine 21 to proline 703. 4 consecutive Ig-like C2-type domains span residues proline 37–leucine 142, proline 154–serine 235, proline 251–valine 339, and proline 345–threonine 432. Disulfide bonds link cysteine 60/cysteine 126, cysteine 172/cysteine 219, cysteine 275/cysteine 323, and cysteine 366/cysteine 414. N-linked (GlcNAc...) asparagine glycans are attached at residues asparagine 79, asparagine 102, and asparagine 208. Residues proline 435 to valine 468 form a disordered region. 2 N-linked (GlcNAc...) asparagine glycosylation sites follow: asparagine 447 and asparagine 467. 2 consecutive Fibronectin type-III domains span residues proline 462–glycine 570 and valine 578–proline 673. 4 residues coordinate heparin: arginine 498, lysine 504, lysine 506, and arginine 544. Asparagine 560 carries an N-linked (GlcNAc...) asparagine glycan. The segment at leucine 665–phenylalanine 699 is disordered. Over residues glycine 668–phenylalanine 699 the composition is skewed to polar residues. Asparagine 696 carries an N-linked (GlcNAc...) asparagine glycan. Residues isoleucine 704–leucine 724 form a helical membrane-spanning segment. The Cytoplasmic portion of the chain corresponds to cysteine 725 to valine 880. A disordered region spans residues tyrosine 797–valine 880. Low complexity-rich tracts occupy residues arginine 827–asparagine 839 and serine 864–valine 880.

Belongs to the immunoglobulin superfamily. IHOG family. Homodimer. Heterotetramer; 2 iHog chains bind 2 hh chains when facilitated by heparin, heparin is required to promote high-affinity interactions between hh and iHog.

Its subcellular location is the membrane. Its function is as follows. Mediates response to the active Hedgehog (Hh) protein signal in embryos, functioning upstream or at the level of patched (ptc). The polypeptide is Interference hedgehog (Drosophila ananassae (Fruit fly)).